Here is a 472-residue protein sequence, read N- to C-terminus: Alkaline phosphatase (472 aa).

Residues 1-21 (MKQSAIALALLSCLITPVSQA) form the signal peptide. Asp-74 provides a ligand contact to Mg(2+). Asp-74 serves as a coordination point for Zn(2+). The Phosphoserine intermediate role is filled by Ser-125. Mg(2+) contacts are provided by Asp-176 and Thr-178. Disulfide bonds link Cys-191–Cys-201 and Cys-309–Cys-359. Glu-345 serves as a coordination point for Mg(2+). Residues Asp-350, His-354, Asp-392, His-393, and His-435 each contribute to the Zn(2+) site.

Belongs to the alkaline phosphatase family. Homodimer. Mg(2+) is required as a cofactor. Requires Zn(2+) as cofactor.

The protein localises to the periplasm. The enzyme catalyses a phosphate monoester + H2O = an alcohol + phosphate. In Escherichia fergusonii (strain ATCC 35469 / DSM 13698 / CCUG 18766 / IAM 14443 / JCM 21226 / LMG 7866 / NBRC 102419 / NCTC 12128 / CDC 0568-73), this protein is Alkaline phosphatase (phoA).